Consider the following 142-residue polypeptide: RNA polymerase-binding transcription factor DksA (142 aa).

Disordered stretches follow at residues 1–20 (MQTA…EDEP), 51–70 (HLQK…SSET), and 119–142 (RPTA…HRDD). The dksA C4-type zinc-finger motif lies at 104 to 128 (CEETGEPIGLARLEARPTATMSVEA). Positions 128 to 142 (AQERHERRERVHRDD) are enriched in basic and acidic residues.

The protein belongs to the DksA family. As to quaternary structure, interacts directly with the RNA polymerase.

It localises to the cytoplasm. Its function is as follows. Transcription factor that acts by binding directly to the RNA polymerase (RNAP). Required for negative regulation of rRNA expression and positive regulation of several amino acid biosynthesis promoters. The chain is RNA polymerase-binding transcription factor DksA from Caulobacter vibrioides (strain ATCC 19089 / CIP 103742 / CB 15) (Caulobacter crescentus).